A 627-amino-acid polypeptide reads, in one-letter code: DNA mismatch repair protein MutL (627 aa).

The disordered stretch occupies residues 376-404 (APASTNEVREGSAARAGNYQPPEPPSREA).

It belongs to the DNA mismatch repair MutL/HexB family.

Its function is as follows. This protein is involved in the repair of mismatches in DNA. It is required for dam-dependent methyl-directed DNA mismatch repair. May act as a 'molecular matchmaker', a protein that promotes the formation of a stable complex between two or more DNA-binding proteins in an ATP-dependent manner without itself being part of a final effector complex. The protein is DNA mismatch repair protein MutL of Aeromonas salmonicida (strain A449).